The primary structure comprises 205 residues: IQ domain-containing protein F1 (205 aa).

Basic and acidic residues-rich tracts occupy residues 1-24 (MEEK…KEMP) and 51-68 (ANEK…LSDK). The disordered stretch occupies residues 1–68 (MEEKQPQKTK…PENQKKLSDK (68 aa)). IQ domains lie at 68-97 (KDTV…SACI) and 124-153 (KEWA…AVRI).

Interacts with calmodulin.

It localises to the cytoplasmic vesicle. The protein resides in the secretory vesicle. It is found in the acrosome. Functionally, involved in sperm capacitation and acrosome reaction. The polypeptide is IQ domain-containing protein F1 (Homo sapiens (Human)).